Consider the following 299-residue polypeptide: Kynurenine formamidase-like hydrolase fscH (299 aa).

Positions 48-52 match the HGGXW motif; it reads HGGAW. A disordered region spans residues 90 to 110; it reads SPRTPSQPVPSGGHVGGEQQA. The active-site Nucleophile is the Ser142.

Belongs to the kynurenine formamidase family.

The protein operates within secondary metabolite biosynthesis. In terms of biological role, kynurenine formamidase-like hydrolase; part of the fragmented gene cluster that mediates the biosynthesis of fusarochromene, a tryptophan-derived metabolite closely related to a group of mycotoxins including fusarochromanone. Within the pathway, fscH converts the product of fscD into 4-hydroxykyrunenine. The first step of the pathway is the epimerization of L-tryptophan to D-tryptophan in the presence of the NRPS-like tryptophan epimerase fscC. D-tryptophan is subsequently hydroxylated by the tryptophan 6-hydroxylase fscE to yield 6-hydroxytryptophan. The pyrrole ring undergoes cleavaged by the tryptophan 2,3-dioxygenase fscD and is finally converted to 4-hydroxykyrunenine by the hydrolase fscH. The NRPS-like oxidoreductase fscA reduces the carboxyl group to primary alcohol and the DMATS-type prenyltransferase fscG performs prenylation, followed by the formation of a chromene ring catalyzed by the oxidoreductase fscI, which leads to desacetylfusarochromene. Epoxidation by fscF and rearrangement reactions of chromene double bonds convert compound desacetylfusarochromene to fusarochromanones. Although specific acetyltransferases were not found near the fsc gene cluster, several predicted enzymes containing the N-acetyltransferase superfamily domain are present in the genome of F.equiseti. These predicted enzymes may have the potential to convert desacetylfusarochromene to fusarochromene. The chain is Kynurenine formamidase-like hydrolase fscH from Fusarium equiseti (Fusarium scirpi).